The primary structure comprises 233 residues: MVKYLNQKEAINVDLELFNEYKFSVDQLMELAGLSCAHAITKCFPADRFGRVLVCCGPGNNGGDGLVCARHLALMGYTPAIYYPKPTAKPLFENLSHQCQRMEICRIDECPTVETSANSYDLIVDALFGFSFKPPVRVDFVPVVELLQQTKLPIASVDIPSGWDVENGKLNDCDLEPTLLISLTAPKLCAKHFKGKHHFLGGRFVPPALQRKYELNLPEYPGNELCLELETHK.

One can recognise a YjeF N-terminal domain in the interval 10–217 (AINVDLELFN…ALQRKYELNL (208 aa)). 60–64 (NNGGD) contacts (6S)-NADPHX. Positions 61 and 125 each coordinate K(+). (6S)-NADPHX-binding positions include 129-135 (GFSFKPP) and aspartate 158. Residue serine 161 participates in K(+) binding.

It belongs to the NnrE/AIBP family. K(+) serves as cofactor.

The enzyme catalyses (6R)-NADHX = (6S)-NADHX. It catalyses the reaction (6R)-NADPHX = (6S)-NADPHX. Functionally, catalyzes the epimerization of the S- and R-forms of NAD(P)HX, a damaged form of NAD(P)H that is a result of enzymatic or heat-dependent hydration. This is a prerequisite for the S-specific NAD(P)H-hydrate dehydratase to allow the repair of both epimers of NAD(P)HX. The protein is NAD(P)H-hydrate epimerase of Drosophila grimshawi (Hawaiian fruit fly).